The primary structure comprises 130 residues: Cyclin-dependent kinase 4 inhibitor B (130 aa).

ANK repeat units follow at residues 5–34 (GSDA…DPNA), 38–66 (FGRR…EPNC), 71–100 (TLTR…RLDV), and 104–130 (WGRL…ATGD). At Thr-12 the chain carries Phosphothreonine.

The protein belongs to the CDKN2 cyclin-dependent kinase inhibitor family. As to quaternary structure, heterodimer of CDKN2B with CDK4 or CDK6. As to expression, expression abundant in lung, less abundant in testis, barely detectable in liver, and not detectable in neonatal kidney, adult kidney, brain, heart, or spleen.

Functionally, interacts strongly with CDK4 and CDK6. Potent inhibitor. Potential effector of TGF-beta induced cell cycle arrest. In Rattus norvegicus (Rat), this protein is Cyclin-dependent kinase 4 inhibitor B (Cdkn2b).